Here is a 642-residue protein sequence, read N- to C-terminus: Nocturnin (642 aa).

The interval 50–87 (LEDDDKPPQLFSVTDEPPSPNEEDYKPPNHHEDDGKLA) is disordered. Basic and acidic residues predominate over residues 72 to 87 (EDYKPPNHHEDDGKLA). Glu-363 lines the Mg(2+) pocket. Residues Glu-363, Asn-430, 453–456 (HLKA), 491–493 (DFN), and His-600 contribute to the substrate site. Residues 611 to 642 (PPTENGKESGSGSGSDGENETEVEGSKHGSIQ) are disordered.

Belongs to the CCR4/nocturin family. In terms of assembly, associates to the CCR4-NOT complex composed of at least Pop2/Caf1-55, Ccr4, Not1, Rga/Not2, and Not3. It depends on Mg(2+) as a cofactor. As to expression, expressed in the head, in the dorsal neurons DN3, a subgroup of clock neurons (at protein level). Ubiquitously expressed in both males and females.

Its subcellular location is the cytoplasm. It catalyses the reaction NADP(+) + H2O = phosphate + NAD(+). The catalysed reaction is NADPH + H2O = phosphate + NADH. In terms of biological role, phosphatase which catalyzes the conversion of NADP(+) to NAD(+) and of NADPH to NADH. Shows a small preference for NADPH over NADP(+). Because of its association with the CCR4-NOT complex, has a role in mRNA deadenylation and decay. Required at the pupal stage for proper wing morphogenesis after eclosion. Its function is as follows. Doesn't have a role in light-mediated behavioral response. In dorsal neurons, contributes to the light-mediated behavioral response. This Drosophila melanogaster (Fruit fly) protein is Nocturnin.